The sequence spans 210 residues: Na(+)-translocating NADH-quinone reductase subunit D (210 aa).

Helical transmembrane passes span 42–62, 72–92, 103–123, 131–151, and 178–198; these read FVMT…VSLI, IIVQ…ILKA, VFVG…AFAM, FIDG…VGFF, and NGLM…IWAI.

The protein belongs to the NqrDE/RnfAE family. As to quaternary structure, composed of six subunits; NqrA, NqrB, NqrC, NqrD, NqrE and NqrF.

Its subcellular location is the cell inner membrane. It carries out the reaction a ubiquinone + n Na(+)(in) + NADH + H(+) = a ubiquinol + n Na(+)(out) + NAD(+). Its function is as follows. NQR complex catalyzes the reduction of ubiquinone-1 to ubiquinol by two successive reactions, coupled with the transport of Na(+) ions from the cytoplasm to the periplasm. NqrA to NqrE are probably involved in the second step, the conversion of ubisemiquinone to ubiquinol. This is Na(+)-translocating NADH-quinone reductase subunit D from Vibrio cholerae serotype O1 (strain M66-2).